Reading from the N-terminus, the 242-residue chain is UDP-2,3-diacylglucosamine hydrolase (242 aa).

Mn(2+)-binding residues include Asp-8, His-10, Asp-41, Asn-79, and His-114. 79-80 (NR) contacts substrate. Positions 122, 164, 167, and 195 each coordinate substrate. His-195 and His-197 together coordinate Mn(2+).

The protein belongs to the LpxH family. Mn(2+) serves as cofactor.

It localises to the cell inner membrane. The enzyme catalyses UDP-2-N,3-O-bis[(3R)-3-hydroxytetradecanoyl]-alpha-D-glucosamine + H2O = 2-N,3-O-bis[(3R)-3-hydroxytetradecanoyl]-alpha-D-glucosaminyl 1-phosphate + UMP + 2 H(+). The protein operates within glycolipid biosynthesis; lipid IV(A) biosynthesis; lipid IV(A) from (3R)-3-hydroxytetradecanoyl-[acyl-carrier-protein] and UDP-N-acetyl-alpha-D-glucosamine: step 4/6. In terms of biological role, hydrolyzes the pyrophosphate bond of UDP-2,3-diacylglucosamine to yield 2,3-diacylglucosamine 1-phosphate (lipid X) and UMP by catalyzing the attack of water at the alpha-P atom. Involved in the biosynthesis of lipid A, a phosphorylated glycolipid that anchors the lipopolysaccharide to the outer membrane of the cell. The sequence is that of UDP-2,3-diacylglucosamine hydrolase from Vibrio parahaemolyticus serotype O3:K6 (strain RIMD 2210633).